The sequence spans 251 residues: Small ribosomal subunit protein uS2 (251 aa).

It belongs to the universal ribosomal protein uS2 family.

The polypeptide is Small ribosomal subunit protein uS2 (Synechococcus elongatus (strain ATCC 33912 / PCC 7942 / FACHB-805) (Anacystis nidulans R2)).